We begin with the raw amino-acid sequence, 359 residues long: Methyltransferase eqxD (359 aa).

Residues 198–199, aspartate 224, 248–249, arginine 264, and arginine 265 contribute to the S-adenosyl-L-methionine site; these read GG and SF.

Belongs to the class I-like SAM-binding methyltransferase superfamily. Cation-independent O-methyltransferase family.

The enzyme catalyses trichosetin + S-adenosyl-L-methionine = equisetin + S-adenosyl-L-homocysteine + H(+). Its pathway is mycotoxin biosynthesis. Its function is as follows. Methyltransferase; part of the gene cluster that mediates the biosynthesis of equisetin, a trans-fused decalin-containing tetramic acid with antimicrobial activity. The PKS module of eqxS together with the enoylreductase eqxC catalyze the formation of the polyketide unit which is then conjugated to L-serine by the condensation domain of the eqxS NRPS module. Activity of the Dieckmann cyclase domain (RED) results in release of the Dieckmann product intermediate. Diels-Alderase eqx3 is involved in endo-selective Diels-Alder cycloaddition to form the decalin ring, leading to the production of N-desmethylequisetin also called trichosetin. Subsequent N-methylation is carried out by eqxD to give equisetin. The chain is Methyltransferase eqxD from Fusarium heterosporum.